Here is a 690-residue protein sequence, read N- to C-terminus: Elongation factor G (690 aa).

The tr-type G domain occupies 8 to 283 (EDYRNFGIMA…AVVDYLPSPI (276 aa)). GTP-binding positions include 17–24 (AHIDAGKT), 81–85 (DTPGH), and 135–138 (NKMD).

This sequence belongs to the TRAFAC class translation factor GTPase superfamily. Classic translation factor GTPase family. EF-G/EF-2 subfamily.

It localises to the cytoplasm. Catalyzes the GTP-dependent ribosomal translocation step during translation elongation. During this step, the ribosome changes from the pre-translocational (PRE) to the post-translocational (POST) state as the newly formed A-site-bound peptidyl-tRNA and P-site-bound deacylated tRNA move to the P and E sites, respectively. Catalyzes the coordinated movement of the two tRNA molecules, the mRNA and conformational changes in the ribosome. The chain is Elongation factor G from Bradyrhizobium diazoefficiens (strain JCM 10833 / BCRC 13528 / IAM 13628 / NBRC 14792 / USDA 110).